A 348-amino-acid polypeptide reads, in one-letter code: Phosphate acyltransferase (348 aa).

The protein belongs to the PlsX family. As to quaternary structure, homodimer. Probably interacts with PlsY.

It localises to the cytoplasm. It catalyses the reaction a fatty acyl-[ACP] + phosphate = an acyl phosphate + holo-[ACP]. It participates in lipid metabolism; phospholipid metabolism. In terms of biological role, catalyzes the reversible formation of acyl-phosphate (acyl-PO(4)) from acyl-[acyl-carrier-protein] (acyl-ACP). This enzyme utilizes acyl-ACP as fatty acyl donor, but not acyl-CoA. This Pectobacterium atrosepticum (strain SCRI 1043 / ATCC BAA-672) (Erwinia carotovora subsp. atroseptica) protein is Phosphate acyltransferase.